The primary structure comprises 429 residues: Small ribosomal subunit protein mS47 (429 aa).

Substrate-binding residues include Glu141, Gly166, Glu189, and Asp197.

It belongs to the enoyl-CoA hydratase/isomerase family. Mitochondrion-specific ribosomal protein mS47 subfamily. In terms of assembly, component of the mitochondrial small ribosomal subunit (mt-SSU). Mature yeast 74S mitochondrial ribosomes consist of a small (37S) and a large (54S) subunit. The 37S small subunit contains a 15S ribosomal RNA (15S mt-rRNA) and at least 32 different proteins. The 54S large subunit contains a 21S rRNA (21S mt-rRNA) and at least 45 different proteins. mS47/snr1 forms a protuberance of the yeast mitoribosome and retains a solvent-exposed cavity likely capable of accommodating a substrate, in accordance with it being an active enzyme as well as an integral constituent of the mitoribosome.

It is found in the mitochondrion. It carries out the reaction 3-hydroxy-2-methylpropanoyl-CoA + H2O = 3-hydroxy-2-methylpropanoate + CoA + H(+). The protein operates within amino-acid degradation; L-valine degradation. Functionally, component of the mitochondrial ribosome (mitoribosome), a dedicated translation machinery responsible for the synthesis of mitochondrial genome-encoded proteins, including at least some of the essential transmembrane subunits of the mitochondrial respiratory chain. The mitoribosomes are attached to the mitochondrial inner membrane and translation products are cotranslationally integrated into the membrane. mS47/snr1 has enzymatic activity in vitro, and is able to catalyze the specific hydrolysis of 3-hydroxyisobutyryl-CoA (HIBYL-CoA). However, because the turnover rate of mS47/snr1 is only a fraction of that of the homologous mammalian enzyme, the physiological function of this activity remains unclear. Has an indirect role in endocytic membrane trafficking. The sequence is that of Small ribosomal subunit protein mS47 (snr1) from Schizosaccharomyces pombe (strain 972 / ATCC 24843) (Fission yeast).